Reading from the N-terminus, the 483-residue chain is Glutamyl-tRNA(Gln) amidotransferase subunit A (483 aa).

Residues Lys-75 and Ser-150 each act as charge relay system in the active site. Ser-174 functions as the Acyl-ester intermediate in the catalytic mechanism.

This sequence belongs to the amidase family. GatA subfamily. Heterotrimer of A, B and C subunits.

The enzyme catalyses L-glutamyl-tRNA(Gln) + L-glutamine + ATP + H2O = L-glutaminyl-tRNA(Gln) + L-glutamate + ADP + phosphate + H(+). Allows the formation of correctly charged Gln-tRNA(Gln) through the transamidation of misacylated Glu-tRNA(Gln) in organisms which lack glutaminyl-tRNA synthetase. The reaction takes place in the presence of glutamine and ATP through an activated gamma-phospho-Glu-tRNA(Gln). This Legionella pneumophila (strain Paris) protein is Glutamyl-tRNA(Gln) amidotransferase subunit A.